We begin with the raw amino-acid sequence, 870 residues long: NEDD4-like E3 ubiquitin-protein ligase WWP2 (870 aa).

The C2 domain maps to 1–117 (MASASSSRAG…KNNGGKMENM (117 aa)). A disordered region spans residues 151–299 (VPNGSALTDG…QQLPAAAQAP (149 aa)). Composition is skewed to polar residues over residues 152-171 (PNGS…SSGT) and 200-210 (SARTTPATGEQ). Position 211 is a phosphoserine (Ser-211). Polar residues-rich tracts occupy residues 222-243 (VKNS…TTAT) and 263-272 (VTPNPNTTSL). The segment covering 290-299 (QQLPAAAQAP) has biased composition (low complexity). WW domains are found at residues 300–333 (DALP…RPLP), 330–363 (RPLP…RPTA), 405–437 (GPLP…DPRT), and 444–477 (PALP…DPRP). One can recognise an HECT domain in the interval 536-870 (KPYDLRRRLY…IEETEGFGQE (335 aa)). The Glycyl thioester intermediate role is filled by Cys-838.

Interacts with POU5F1, RBP1, EGR2 and SLC11A2. Interacts with SCNN1A, SCNN1B, SCNN1G, WBP1, WBP2 and ATN1. Interacts with ERBB4, NDFIP1 and NDFIP2. Interacts with ARRDC4. Interacts (via WW domains) with ARRDC1 (via PPxY motifs); ubiquitinates ARRDC1. Interacts (via WW domains) with ARRDC2 and ARRDC3. As to quaternary structure, (Microbial infection) Interacts with adenovirus type 2 PIII. Post-translationally, autoubiquitinated. Ubiquitinated by the SCF(FBXL15) complex, leading to its degradation by the proteasome. Detected in heart, throughout the brain, placenta, lung, liver, muscle, kidney and pancreas. Also detected in spleen and peripheral blood leukocytes.

The protein localises to the nucleus. The catalysed reaction is S-ubiquitinyl-[E2 ubiquitin-conjugating enzyme]-L-cysteine + [acceptor protein]-L-lysine = [E2 ubiquitin-conjugating enzyme]-L-cysteine + N(6)-ubiquitinyl-[acceptor protein]-L-lysine.. Its pathway is protein modification; protein ubiquitination. Its activity is regulated as follows. Activated by NDFIP1- and NDFIP2-binding. In terms of biological role, E3 ubiquitin-protein ligase which accepts ubiquitin from an E2 ubiquitin-conjugating enzyme in the form of a thioester and then directly transfers the ubiquitin to targeted substrates. Polyubiquitinates POU5F1 by 'Lys-63'-linked conjugation and promotes it to proteasomal degradation; in embryonic stem cells (ESCs) the ubiquitination is proposed to regulate POU5F1 protein level. Ubiquitinates EGR2 and promotes it to proteasomal degradation; in T-cells the ubiquitination inhibits activation-induced cell death. Ubiquitinates SLC11A2; the ubiquitination is enhanced by presence of NDFIP1 and NDFIP2. Ubiquitinates RPB1 and promotes it to proteasomal degradation. This chain is NEDD4-like E3 ubiquitin-protein ligase WWP2 (WWP2), found in Homo sapiens (Human).